A 115-amino-acid chain; its full sequence is Large ribosomal subunit protein bL20 (115 aa).

The protein belongs to the bacterial ribosomal protein bL20 family.

In terms of biological role, binds directly to 23S ribosomal RNA and is necessary for the in vitro assembly process of the 50S ribosomal subunit. It is not involved in the protein synthesizing functions of that subunit. The polypeptide is Large ribosomal subunit protein bL20 (Borrelia hermsii (strain HS1 / DAH)).